A 174-amino-acid chain; its full sequence is Peptide deformylase (174 aa).

Positions 96 and 138 each coordinate Fe cation. Residue Glu-139 is part of the active site. His-142 serves as a coordination point for Fe cation.

Belongs to the polypeptide deformylase family. The cofactor is Fe(2+).

It catalyses the reaction N-terminal N-formyl-L-methionyl-[peptide] + H2O = N-terminal L-methionyl-[peptide] + formate. Functionally, removes the formyl group from the N-terminal Met of newly synthesized proteins. Requires at least a dipeptide for an efficient rate of reaction. N-terminal L-methionine is a prerequisite for activity but the enzyme has broad specificity at other positions. This chain is Peptide deformylase, found in Helicobacter pylori (strain G27).